The primary structure comprises 181 residues: RNA pyrophosphohydrolase (181 aa).

Residues 6 to 149 form the Nudix hydrolase domain; the sequence is GFRPNVGIIL…KRRVYTRALQ (144 aa). Positions 38–59 match the Nudix box motif; sequence GGIKAQETPEEALFRELEEEVG. The interval 159-181 is disordered; sequence GLPRQPPVGRPRRSAPPRGCRRA. Basic residues predominate over residues 168 to 181; the sequence is RPRRSAPPRGCRRA.

Belongs to the Nudix hydrolase family. RppH subfamily. It depends on a divalent metal cation as a cofactor.

Functionally, accelerates the degradation of transcripts by removing pyrophosphate from the 5'-end of triphosphorylated RNA, leading to a more labile monophosphorylated state that can stimulate subsequent ribonuclease cleavage. This is RNA pyrophosphohydrolase from Alkalilimnicola ehrlichii (strain ATCC BAA-1101 / DSM 17681 / MLHE-1).